We begin with the raw amino-acid sequence, 123 residues long: Large ribosomal subunit protein uL14 (123 aa).

The protein belongs to the universal ribosomal protein uL14 family. Part of the 50S ribosomal subunit. Forms a cluster with proteins L3 and L19. In the 70S ribosome, L14 and L19 interact and together make contacts with the 16S rRNA in bridges B5 and B8.

Its function is as follows. Binds to 23S rRNA. Forms part of two intersubunit bridges in the 70S ribosome. The polypeptide is Large ribosomal subunit protein uL14 (Enterobacter sp. (strain 638)).